Reading from the N-terminus, the 331-residue chain is Cytosolic arginine sensor for mTORC1 subunit 1 (331 aa).

A Phosphoserine modification is found at Ser-14. The region spanning 72 to 139 is the ACT 1 domain; the sequence is AEATWLVMNV…SVVIHTLARE (68 aa). 110 to 111 serves as a coordination point for L-arginine; that stretch reads SV. The segment at 155-174 is disordered; sequence GDDSSNGFPQAQHGPSPTVH. A compositionally biased stretch (polar residues) spans 156–174; the sequence is DDSSNGFPQAQHGPSPTVH. The ACT 2 domain maps to 262–322; it reads WRMVRIGGQP…SCVIDILQRR (61 aa). L-arginine-binding positions include Gly-273, 279–280, and 299–303; these read IV and TFNFD.

This sequence belongs to the GATS family. As to quaternary structure, forms homodimers and heterodimers with CASTOR2. Interacts with the GATOR2 complex which is composed of MIOS, SEC13, SEH1L, WDR24 and WDR59; the interaction is negatively regulated by arginine. Interacts with TM4SF5; the interaction is positively regulated by leucine and is negatively regulated by arginine. In terms of processing, phosphorylation at Ser-14 by AKT1, promoting the interaction between CASTOR1 and RNF167. Post-translationally, ubiquitinated by RNF167 via 'Lys-29'-polyubiquitination, leading to its degradation, releasing the GATOR2 complex. Ubiquitination by RNF167 is promoted by phosphorylation at Ser-14 by AKT1.

The protein localises to the cytoplasm. The protein resides in the cytosol. Functionally, functions as an intracellular arginine sensor within the amino acid-sensing branch of the TORC1 signaling pathway. As a homodimer or a heterodimer with CASTOR2, binds and inhibits the GATOR subcomplex GATOR2 and thereby mTORC1. Binding of arginine to CASTOR1 allosterically disrupts the interaction of CASTOR1-containing dimers with GATOR2 which can in turn activate mTORC1 and the TORC1 signaling pathway. In Rattus norvegicus (Rat), this protein is Cytosolic arginine sensor for mTORC1 subunit 1.